We begin with the raw amino-acid sequence, 1220 residues long: Polycomb protein Sfmbt (1220 aa).

An FCS-type zinc finger spans residues 322–357 (PIQKDGMAVCKRCGAIGVKHTFYTKSRRFCSMACAR). 4 residues coordinate Zn(2+): Cys-331, Cys-334, Cys-351, and Cys-355. Disordered regions lie at residues 371-399 (GDQA…QSQS) and 464-483 (DATA…SYLS). The span at 473 to 482 (EGASTPNSYL) shows a compositional bias: polar residues. MBT repeat units follow at residues 536–647 (YDWL…LIPP), 655–753 (KDWK…LAAP), 761–871 (LAGR…VTPP), and 879–975 (FTWE…LEGP). Disordered stretches follow at residues 976 to 1024 (PRVA…IALK) and 1050 to 1092 (NNQP…AGSG). Positions 991-1000 (KIQRKRKPKK) are enriched in basic residues. Positions 1052-1068 (QPEEEGDEEDPDADGDG) are enriched in acidic residues. Residues 1071–1082 (STSHISEQSTTQ) show a composition bias toward polar residues. A compositionally biased stretch (low complexity) spans 1083 to 1092 (SSSDLIAGSG). In terms of domain architecture, SAM spans 1140–1203 (WNVYDVSQFL…SDLIAQLKCK (64 aa)).

In terms of assembly, interacts with pho as a component of the pho-repressive complex (PhoRC).

It localises to the nucleus. Polycomb group (PcG) protein that binds to the Polycomb response elements (PREs) found in the regulatory regions of many genes. PcG proteins act by forming multiprotein complexes, which are required to maintain the transcriptionally repressive state of homeotic genes throughout development. PcG proteins are not required to initiate repression, but to maintain it during later stages of development. They probably act via the methylation of histones, rendering chromatin heritably changed in its expressibility. Necessary but not sufficient to recruit a functional PcG repressive complex that represses target genes, suggesting that the recruitment of the distinct PRC1 complex is also required to allow a subsequent repression. In Drosophila melanogaster (Fruit fly), this protein is Polycomb protein Sfmbt.